Consider the following 233-residue polypeptide: Large ribosomal subunit protein uL1 (233 aa).

This sequence belongs to the universal ribosomal protein uL1 family. In terms of assembly, part of the 50S ribosomal subunit.

In terms of biological role, binds directly to 23S rRNA. The L1 stalk is quite mobile in the ribosome, and is involved in E site tRNA release. Functionally, protein L1 is also a translational repressor protein, it controls the translation of the L11 operon by binding to its mRNA. The polypeptide is Large ribosomal subunit protein uL1 (Syntrophomonas wolfei subsp. wolfei (strain DSM 2245B / Goettingen)).